The following is an 868-amino-acid chain: MASLENLVARYQRCFNDQSLKNSTIELEIRFQHINFLLFKTVYEALVAQEIPSTISHSIRCIKKVHHENHCREKILPSDNFYFKKQPLMFFKFSEPASLGCKVSLAIEQPIRKFILDSSVLVRLKNRTTFQISDLWKIELTVVKQLMGSEVSAKLTAFKTLLFDTPEQQTAKNMMTLINPDDEYLYEIEIEYTGKPESLTAADVIKIKNTVLTLISPNHLMLTAYHQAIEFIASHILSSEILLARIKSGKWGLKRLLPQVKSMTKADYMKFYPPVGYYVTDKADGIRGIAVIQDTQMYVVADQLYSLGTTGIEPLKPTILDGEFMPEKKEFYGFDVIMYEGNLLTQQGFETRIEALNKGIKVLQAFNIKAEMKPFISLTSADPNVLLKNFESVFKKKTRPYSIDGIILVEPGNSYLNTNTFKWKPTWDNTLDFLVRKCPESLNVPEYAPKKGFSLHLLFVGISGELFKKLALNWCPGYTKLFPVTQRNQNYFPVQFQPSDFPLAFLYYHPDTSSFSDIDGKVLEMRCLKREVNYVSWEIVKIREDRQQDLKTGGYFGNDFKTAELTWLNYMDPFSFEELAKGPSGMYFAGAKTGIYRAQTALISFIKQEIIQKISHQSWVIDLGIGKGQDLGRYLDAGIRHLVGIDKDQTALAELIYRKFSHATTRQHKHATNIYVLHQDLAEPAKEISEKVHQIYGFPKEGASSIVSNLFIHYLMKSSQQVENLAVLCHKLLQPGGMVWFTTMLGERVLELLHENRVELNEVWEARENEVVKFAIKRLFKEDVLQETGQEIGVLLPFSNGDFYNEYLVNTAFLIKIFKHHGFSLVQMQSFKDWIPEFQTFSKSLYKILTEADKTWTSLFGFICLRKN.

Residue Lys-282 is the N6-GMP-lysine intermediate of the active site. The region spanning 594 to 868 (GIYRAQTALI…LFGFICLRKN (275 aa)) is the mRNA cap 0 methyltransferase domain. Residues Lys-607, Gly-624, Asp-646, and 710–712 (LFI) each bind S-adenosyl-L-methionine.

This sequence in the N-terminal section; belongs to the dsDNA virus mRNA guanylyltransferase family. In the C-terminal section; belongs to the class I-like SAM-binding methyltransferase superfamily. mRNA cap 0 methyltransferase family. As to quaternary structure, part of the viral DNA-directed RNA polymerase that consists of 8 polII-like subunits (RPB1, RPB2, RPB3, RPB5, RPB6, RPB7, RPB9, RPB10), a capping enzyme and a termination factor.

It localises to the virion. It catalyses the reaction a 5'-end triphospho-ribonucleoside in mRNA + H2O = a 5'-end diphospho-ribonucleoside in mRNA + phosphate + H(+). The enzyme catalyses a 5'-end diphospho-ribonucleoside in mRNA + GTP + H(+) = a 5'-end (5'-triphosphoguanosine)-ribonucleoside in mRNA + diphosphate. It carries out the reaction a 5'-end (5'-triphosphoguanosine)-ribonucleoside in mRNA + S-adenosyl-L-methionine = a 5'-end (N(7)-methyl 5'-triphosphoguanosine)-ribonucleoside in mRNA + S-adenosyl-L-homocysteine. It functions in the pathway mRNA processing; mRNA capping. Functionally, probably catalyzes the second reaction in the mRNA cap formation pathway. Forms a covalent complex with GTP. The protein is mRNA-capping enzyme of Ornithodoros (relapsing fever ticks).